Reading from the N-terminus, the 239-residue chain is 2-C-methyl-D-erythritol 4-phosphate cytidylyltransferase (239 aa).

It belongs to the IspD/TarI cytidylyltransferase family. IspD subfamily.

The catalysed reaction is 2-C-methyl-D-erythritol 4-phosphate + CTP + H(+) = 4-CDP-2-C-methyl-D-erythritol + diphosphate. Its pathway is isoprenoid biosynthesis; isopentenyl diphosphate biosynthesis via DXP pathway; isopentenyl diphosphate from 1-deoxy-D-xylulose 5-phosphate: step 2/6. In terms of biological role, catalyzes the formation of 4-diphosphocytidyl-2-C-methyl-D-erythritol from CTP and 2-C-methyl-D-erythritol 4-phosphate (MEP). The chain is 2-C-methyl-D-erythritol 4-phosphate cytidylyltransferase from Acidobacterium capsulatum (strain ATCC 51196 / DSM 11244 / BCRC 80197 / JCM 7670 / NBRC 15755 / NCIMB 13165 / 161).